The chain runs to 150 residues: Transcription antitermination protein NusB (150 aa).

Belongs to the NusB family.

Functionally, involved in transcription antitermination. Required for transcription of ribosomal RNA (rRNA) genes. Binds specifically to the boxA antiterminator sequence of the ribosomal RNA (rrn) operons. This chain is Transcription antitermination protein NusB, found in Streptococcus equi subsp. zooepidemicus (strain H70).